The chain runs to 500 residues: Enolase (500 aa).

Substrate contacts are provided by histidine 225 and glutamate 234. The active-site Proton donor is the glutamate 277. Mg(2+) is bound by residues aspartate 312, glutamate 361, and aspartate 386. Substrate is bound by residues glutamate 361 and aspartate 386. The Proton acceptor role is filled by lysine 411. Substrate-binding positions include 438 to 441 and lysine 462; that span reads SHRS.

This sequence belongs to the enolase family. Homodimer. Mg(2+) serves as cofactor.

The protein resides in the cytoplasm. It carries out the reaction (2R)-2-phosphoglycerate = phosphoenolpyruvate + H2O. Its pathway is carbohydrate degradation; glycolysis; pyruvate from D-glyceraldehyde 3-phosphate: step 4/5. Enzyme of the glycolytic pathway. Glycolysis is essential in glial cells but not in neurons; neurons rely on the citric acid cycle for their energy needs, and on lactate and alanine secreted into the hemolymph by glial cells to fuel it. The polypeptide is Enolase (Drosophila melanogaster (Fruit fly)).